Consider the following 190-residue polypeptide: Acyl-acyl carrier protein thioesterase ATL3, chloroplastic (190 aa).

The transit peptide at 1–49 directs the protein to the chloroplast; the sequence is MFLQVTGTATPAMPAVVFLNSWRRPLSIPLRSVKTFKPLAFFDLKGGKG. Residue Asp66 is part of the active site.

It belongs to the 4-hydroxybenzoyl-CoA thioesterase family. As to expression, highly expressed in stems and flowers and at lower levels in rosette leaves, cauline leaves and siliques.

Its subcellular location is the plastid. The protein localises to the chloroplast. Its function is as follows. Acyl-ACP thioesterase involved in the production of fatty acids and beta-keto fatty acids. Can produce fatty acids of long chain (14:1 and 16:1) and beta-keto fatty acids of medium to long chain (8:0, 10:0, 12:0, 12:1, 14:0 and 16:0) when expressed in a heterologous organism (E.coli). Possesses thioesterase activity for lauroyl-ACP (12:0-ACP) in vitro. May play a role in the generation of long fatty acids in the chloroplast. The protein is Acyl-acyl carrier protein thioesterase ATL3, chloroplastic of Arabidopsis thaliana (Mouse-ear cress).